Here is a 165-residue protein sequence, read N- to C-terminus: Nucleotide-binding protein MXAN_1478 (165 aa).

It belongs to the YajQ family.

Nucleotide-binding protein. The sequence is that of Nucleotide-binding protein MXAN_1478 from Myxococcus xanthus (strain DK1622).